Consider the following 129-residue polypeptide: UPF0102 protein CT2262 (129 aa).

This sequence belongs to the UPF0102 family.

This chain is UPF0102 protein CT2262, found in Chlorobaculum tepidum (strain ATCC 49652 / DSM 12025 / NBRC 103806 / TLS) (Chlorobium tepidum).